A 428-amino-acid chain; its full sequence is Glutamate-1-semialdehyde 2,1-aminomutase (428 aa).

Lysine 265 is modified (N6-(pyridoxal phosphate)lysine).

Belongs to the class-III pyridoxal-phosphate-dependent aminotransferase family. HemL subfamily. Homodimer. Pyridoxal 5'-phosphate is required as a cofactor.

It is found in the cytoplasm. It catalyses the reaction (S)-4-amino-5-oxopentanoate = 5-aminolevulinate. Its pathway is porphyrin-containing compound metabolism; protoporphyrin-IX biosynthesis; 5-aminolevulinate from L-glutamyl-tRNA(Glu): step 2/2. This chain is Glutamate-1-semialdehyde 2,1-aminomutase, found in Shewanella frigidimarina (strain NCIMB 400).